Consider the following 312-residue polypeptide: DNA-directed RNA polymerase subunit alpha (312 aa).

The alpha N-terminal domain (alpha-NTD) stretch occupies residues 1–226 (MIEFEKPNIT…EHFKVFMSTD (226 aa)). Residues 243-312 (NEKKLEMTIE…DLGLSLRQDD (70 aa)) form an alpha C-terminal domain (alpha-CTD) region.

Belongs to the RNA polymerase alpha chain family. In terms of assembly, homodimer. The RNAP catalytic core consists of 2 alpha, 1 beta, 1 beta' and 1 omega subunit. When a sigma factor is associated with the core the holoenzyme is formed, which can initiate transcription.

It carries out the reaction RNA(n) + a ribonucleoside 5'-triphosphate = RNA(n+1) + diphosphate. Functionally, DNA-dependent RNA polymerase catalyzes the transcription of DNA into RNA using the four ribonucleoside triphosphates as substrates. In Lactobacillus johnsonii (strain CNCM I-12250 / La1 / NCC 533), this protein is DNA-directed RNA polymerase subunit alpha.